Here is a 189-residue protein sequence, read N- to C-terminus: Large ribosomal subunit protein bL17 (189 aa).

The protein belongs to the bacterial ribosomal protein bL17 family. Part of the 50S ribosomal subunit. Contacts protein L32.

The sequence is that of Large ribosomal subunit protein bL17 from Rhodococcus jostii (strain RHA1).